The following is a 263-amino-acid chain: Tropinone reductase homolog At2g29300 (263 aa).

13 to 37 (LVTGAASGIGYAIVEELAGFGARIH) is a binding site for NADP(+). Residue S146 coordinates substrate. The Proton acceptor role is filled by Y160.

The protein belongs to the short-chain dehydrogenases/reductases (SDR) family. SDR65C subfamily.

The protein is Tropinone reductase homolog At2g29300 of Arabidopsis thaliana (Mouse-ear cress).